The sequence spans 164 residues: Mineralocorticoid receptor (164 aa).

Residues 1 to 162 enclose the NR LBD domain; that stretch reads QYSWMCLSSF…EFPRCWWRSS (162 aa). 21-hydroxyprogesterone contacts are provided by Arg15 and Thr143. Residues Arg15 and Thr143 each contribute to the aldosterone site. Progesterone is bound by residues Arg15 and Thr143.

This sequence belongs to the nuclear hormone receptor family. NR3 subfamily. In terms of assembly, heteromultimeric cytoplasmic complex with HSP90, HSP70, and FKBP4, in the absence of ligand. After ligand binding, it translocates to the nucleus and binds to DNA as a homodimer and as a heterodimer with NR3C1. Binds the coactivator NCOA2. May interact with HSD11B2 in the absence of ligand. Binds the coactivators NCOA1, TIF1 and NRIP1. Post-translationally, phosphorylated.

Its subcellular location is the cytoplasm. The protein localises to the nucleus. The protein resides in the endoplasmic reticulum membrane. In terms of biological role, receptor for both mineralocorticoids (MC) such as aldosterone and glucocorticoids (GC) such as corticosterone or cortisol. Binds to mineralocorticoid response elements (MRE) and transactivates target genes. The effect of MC is to increase ion and water transport and thus raise extracellular fluid volume and blood pressure and lower potassium levels. In Sus scrofa (Pig), this protein is Mineralocorticoid receptor (NR3C2).